A 337-amino-acid polypeptide reads, in one-letter code: MTQVFQGRSFLAEKDFTRAELEYLIDFSAHLKDLKKRGVPHHYLEGKNIALLFEKTSTRTRAAFTTAAIDLGAHPEYLGANDIQLGKKESTEDTAKVLGRMFDGIEFRGFSQRMVEELAEFSGVPVWNGLTDEWHPTQMLADYLTVKENFGKLEGLTLVYCGDGRNNVANSLLVTGAILGVNVHIFSPKELFPEEEIVTLAEGYAKESGARILITEDADEAVKGADVLYTDVWVSMGEEDKFKERVELLQPYQVNMDLVQKAGNDKLIFLHCLPAFHDTNTVYGKDVAEKFGVKEMEVTDEVFRSKYARHFDQAENRMHTIKAVMAATLGNLFIPKV.

Carbamoyl phosphate contacts are provided by residues S57–T60, Q84, R108, and H135–Q138. L-ornithine contacts are provided by residues N167, D231, and S235–M236. Residues C272–L273 and R317 each bind carbamoyl phosphate.

This sequence belongs to the aspartate/ornithine carbamoyltransferase superfamily. OTCase family.

Its subcellular location is the cytoplasm. The catalysed reaction is carbamoyl phosphate + L-ornithine = L-citrulline + phosphate + H(+). It participates in amino-acid degradation; L-arginine degradation via ADI pathway; carbamoyl phosphate from L-arginine: step 2/2. Functionally, reversibly catalyzes the transfer of the carbamoyl group from carbamoyl phosphate (CP) to the N(epsilon) atom of ornithine (ORN) to produce L-citrulline. The chain is Ornithine carbamoyltransferase, catabolic (arcB) from Streptococcus pyogenes serotype M1.